The chain runs to 247 residues: 5'-nucleotidase SurE (247 aa).

Residues Asp8, Asp9, Ser39, and Asn91 each coordinate a divalent metal cation.

The protein belongs to the SurE nucleotidase family. Requires a divalent metal cation as cofactor.

The protein localises to the cytoplasm. The enzyme catalyses a ribonucleoside 5'-phosphate + H2O = a ribonucleoside + phosphate. Nucleotidase that shows phosphatase activity on nucleoside 5'-monophosphates. This Nitrosomonas europaea (strain ATCC 19718 / CIP 103999 / KCTC 2705 / NBRC 14298) protein is 5'-nucleotidase SurE.